A 346-amino-acid chain; its full sequence is Phospholipase A1 (346 aa).

The first 26 residues, 1–26, serve as a signal peptide directing secretion; the sequence is MRKFAAIFVVFFVQCTHLYSLAQARA. Residues 27–37 constitute a propeptide that is removed on maturation; that stretch reads EPDPGVVEYLK. N-linked (GlcNAc...) asparagine glycans are attached at residues N44 and N72. S167 functions as the Nucleophile in the catalytic mechanism. A glycan (N-linked (GlcNAc...) asparagine) is linked at N185. Active-site charge relay system residues include D195 and H258.

The protein belongs to the AB hydrolase superfamily. Lipase family. Contains six disulfide bonds. In terms of processing, N-glycosylated; contains mannose. As to expression, expressed by the venom gland.

The protein resides in the secreted. It catalyses the reaction a 1,2-diacyl-sn-glycero-3-phosphocholine + H2O = a 2-acyl-sn-glycero-3-phosphocholine + a fatty acid + H(+). Catalyzes the hydrolysis of phosphatidylcholine with phospholipase A1 activity. Induces hemolytic activity. Acts as an allergen. In Solenopsis invicta (Red imported fire ant), this protein is Phospholipase A1.